Here is a 124-residue protein sequence, read N- to C-terminus: Large-conductance mechanosensitive channel (124 aa).

Helical transmembrane passes span 14–34 (VIDL…VQSL), 37–57 (NLIN…NLVF), and 67–87 (GSFI…FLIV).

Belongs to the MscL family. In terms of assembly, homopentamer.

It is found in the cell membrane. Channel that opens in response to stretch forces in the membrane lipid bilayer. May participate in the regulation of osmotic pressure changes within the cell. The chain is Large-conductance mechanosensitive channel from Lactobacillus acidophilus (strain ATCC 700396 / NCK56 / N2 / NCFM).